Consider the following 191-residue polypeptide: Pyridoxal 5'-phosphate synthase subunit PdxT (191 aa).

Residue 46 to 48 (GES) coordinates L-glutamine. The active-site Nucleophile is cysteine 78. Residues arginine 105 and 133–134 (IR) contribute to the L-glutamine site. Active-site charge relay system residues include histidine 169 and glutamate 171.

Belongs to the glutaminase PdxT/SNO family. In the presence of PdxS, forms a dodecamer of heterodimers. Only shows activity in the heterodimer.

The catalysed reaction is aldehydo-D-ribose 5-phosphate + D-glyceraldehyde 3-phosphate + L-glutamine = pyridoxal 5'-phosphate + L-glutamate + phosphate + 3 H2O + H(+). It catalyses the reaction L-glutamine + H2O = L-glutamate + NH4(+). It participates in cofactor biosynthesis; pyridoxal 5'-phosphate biosynthesis. In terms of biological role, catalyzes the hydrolysis of glutamine to glutamate and ammonia as part of the biosynthesis of pyridoxal 5'-phosphate. The resulting ammonia molecule is channeled to the active site of PdxS. This Brevibacillus brevis (strain 47 / JCM 6285 / NBRC 100599) protein is Pyridoxal 5'-phosphate synthase subunit PdxT.